The primary structure comprises 359 residues: TGACG-sequence-specific DNA-binding protein TGA-1A (359 aa).

Residues 44 to 54 (KRLDNETEDTS) are compositionally biased toward basic and acidic residues. Residues 44-72 (KRLDNETEDTSHGTVGTSNRYEPETSKPV) are disordered. Residues 72 to 135 (VEKVLRRLAQ…GGVDASQLSY (64 aa)) enclose the bZIP domain. A coiled-coil region spans residues 73–125 (EKVLRRLAQNREAARKSRLRKKAYVQQLENSKLKLIQLEQELERARKQGMCVG). Positions 74-94 (KVLRRLAQNREAARKSRLRKK) are basic motif. A leucine-zipper region spans residues 100 to 114 (LENSKLKLIQLEQEL). A DOG1 domain is found at 143–354 (TAVFDMEYGH…RVLSSQWATR (212 aa)).

The protein belongs to the bZIP family. In terms of assembly, binds DNA as a dimer.

It localises to the nucleus. In terms of biological role, transcriptional activator that binds specifically to the DNA sequence 5'-TGACG-3'. Recognizes ocs elements like the as-1 motif of the cauliflower mosaic virus 35S promoter. Binding to the as-1-like cis elements mediate auxin- and salicylic acid-inducible transcription. Could also bind to the Hex-motif (5'-TGACGTGG-3') another cis-acting element found in plant histone promoters. This chain is TGACG-sequence-specific DNA-binding protein TGA-1A (TGA1A), found in Nicotiana tabacum (Common tobacco).